The chain runs to 31 residues: U13-ctenitoxin-Pn1b (31 aa).

3 disulfide bridges follow: Cys3–Cys17, Cys10–Cys21, and Cys16–Cys30.

Expressed by the venom gland.

Its subcellular location is the secreted. Acts as a neurotoxin. This Phoneutria nigriventer (Brazilian armed spider) protein is U13-ctenitoxin-Pn1b.